The chain runs to 89 residues: MKILLAIALMLSTVMWVSTQQPQEVHTYCGRHLARTMADLCWEEGVDKRSDAQFASYGSAWLMPYSAGRGIVDECCLRPCSVDVLLSYC.

An N-terminal signal peptide occupies residues 1–19 (MKILLAIALMLSTVMWVST). Pyrrolidone carboxylic acid is present on glutamine 20. Disulfide bonds link cysteine 29-cysteine 76, cysteine 41-cysteine 89, and cysteine 75-cysteine 80. Positions 50–68 (SDAQFASYGSAWLMPYSAG) are cleaved as a propeptide — c peptide like.

Belongs to the insulin family. In terms of assembly, heterodimer of a B chain and an A chain linked by two disulfide bonds.

Its subcellular location is the secreted. In terms of biological role, brain peptide responsible for activation of prothoracic glands to produce ecdysone in insects. The polypeptide is Bombyxin A-2 (BBXA2) (Bombyx mori (Silk moth)).